Consider the following 279-residue polypeptide: Putative ABC transporter ATP-binding protein GSU3001 (279 aa).

The ABC transporter domain maps to 1–237 (MRFSVDLKAY…PAEMESVKLR (237 aa)). An ATP-binding site is contributed by 36–43 (GSNGSGKT).

This sequence belongs to the ABC transporter superfamily.

Its subcellular location is the cell inner membrane. Probably part of an ABC transporter complex. Responsible for energy coupling to the transport system. In Geobacter sulfurreducens (strain ATCC 51573 / DSM 12127 / PCA), this protein is Putative ABC transporter ATP-binding protein GSU3001.